We begin with the raw amino-acid sequence, 869 residues long: Probable beta-glucosidase F (869 aa).

Residues 1-19 (MRVLSAIALVASLASSALS) form the signal peptide. N-linked (GlcNAc...) asparagine glycans are attached at residues asparagine 77 and asparagine 261. Aspartate 289 is an active-site residue. N-linked (GlcNAc...) asparagine glycosylation is found at asparagine 332, asparagine 364, asparagine 399, and asparagine 478. The interval 677–697 (STYPPTRPPKGPTPTYPTAIP) is disordered. The span at 681–691 (PTRPPKGPTPT) shows a compositional bias: pro residues. Asparagine 728 carries an N-linked (GlcNAc...) asparagine glycan.

Belongs to the glycosyl hydrolase 3 family.

The protein localises to the secreted. The catalysed reaction is Hydrolysis of terminal, non-reducing beta-D-glucosyl residues with release of beta-D-glucose.. It participates in glycan metabolism; cellulose degradation. Beta-glucosidases are one of a number of cellulolytic enzymes involved in the degradation of cellulosic biomass. Catalyzes the last step releasing glucose from the inhibitory cellobiose. This chain is Probable beta-glucosidase F (bglF), found in Aspergillus fumigatus (strain ATCC MYA-4609 / CBS 101355 / FGSC A1100 / Af293) (Neosartorya fumigata).